The primary structure comprises 535 residues: High-affinity fructose transporter ght6 (535 aa).

Over 1 to 9 (MAKILTIVM) the chain is Cytoplasmic. Residues 10–30 (LVFVSMAGWMFGADTGSIGGI) traverse the membrane as a helical segment. The Extracellular segment spans residues 31–58 (TNMRDFQSRYADRYDPVTDTYSYSSARQ). The helical transmembrane segment at 59–79 (GLLVGMVNTGTTVGCLLSSPL) threads the bilayer. Over 80–87 (GDRFGKRK) the chain is Cytoplasmic. A helical transmembrane segment spans residues 88 to 108 (CIMGWTLVYITGVIVQLTTIP). At 109–112 (SWVQ) the chain is on the extracellular side. A helical membrane pass occupies residues 113–133 (MMVAKIWTGLGIGALSVIAPG). Topologically, residues 134–144 (YQSESSPPHIR) are cytoplasmic. The helical transmembrane segment at 145–165 (GAIVTTYQLFITLGIFIAACI) threads the bilayer. The Extracellular portion of the chain corresponds to 166–181 (NMGTHKYTTHPEAQWR). Residues 182-202 (VPIGINLLWGILMFFGMLFLP) form a helical membrane-spanning segment. The Cytoplasmic segment spans residues 203–268 (ESPRYLAVKG…IFSNEIRYRT (66 aa)). The chain crosses the membrane as a helical span at residues 269–287 (LLGMGVMAFQQLTGNNYFF). Residues 288 to 303 (YYGTQVFRGTGLNSPF) lie on the Extracellular side of the membrane. The helical transmembrane segment at 304–324 (LAALILDAVNFGCTFGAIFVL) threads the bilayer. Topologically, residues 325–330 (EYFGRR) are cytoplasmic. The chain crosses the membrane as a helical span at residues 331–351 (GPLIVGGVWQSICFFIYASVG). Residues 352-365 (DRALTRPNGTSNHR) lie on the Extracellular side of the membrane. N359 carries an N-linked (GlcNAc...) asparagine glycan. The helical transmembrane segment at 366 to 386 (AGAVMIVFSCLFIFSFAQTWA) threads the bilayer. The Cytoplasmic portion of the chain corresponds to 387–406 (PAAYVIVGESYPIRYRSKCA). The helical transmembrane segment at 407 to 427 (AVATASNWFWNFMISFFTPFI) threads the bilayer. The Extracellular segment spans residues 428-434 (SNSIGFK). The helical transmembrane segment at 435 to 455 (YGYVFAACNLCAAIIIFLFAK) threads the bilayer. Over 456 to 535 (ETKGLTLEEI…PQQVTNPVGL (80 aa)) the chain is Cytoplasmic. The span at 484–508 (DREDIKQSDSEKERGPTSKLHEYVE) shows a compositional bias: basic and acidic residues. The disordered stretch occupies residues 484–535 (DREDIKQSDSEKERGPTSKLHEYVEHAPNSYASTHSTESENYPQQVTNPVGL). Positions 513 to 535 (SYASTHSTESENYPQQVTNPVGL) are enriched in polar residues.

Belongs to the major facilitator superfamily. Sugar transporter (TC 2.A.1.1) family.

It localises to the membrane. High-affinity fructose transporter. This chain is High-affinity fructose transporter ght6 (ght6), found in Schizosaccharomyces pombe (strain 972 / ATCC 24843) (Fission yeast).